The following is a 397-amino-acid chain: Elongation factor Tu (397 aa).

Residues 10 to 206 (KPHVNIGTIG…AVDEYIPTPE (197 aa)) enclose the tr-type G domain. Residues 19–26 (GHIDHGKT) form a G1 region. GTP is bound at residue 19 to 26 (GHIDHGKT). Mg(2+) is bound at residue threonine 26. The tract at residues 62-66 (GITIS) is G2. Positions 83–86 (DCPG) are G3. GTP-binding positions include 83–87 (DCPGH) and 138–141 (NKCD). The segment at 138–141 (NKCD) is G4. A G5 region spans residues 176–178 (AAF).

The protein belongs to the TRAFAC class translation factor GTPase superfamily. Classic translation factor GTPase family. EF-Tu/EF-1A subfamily. In terms of assembly, monomer.

The protein resides in the cytoplasm. The enzyme catalyses GTP + H2O = GDP + phosphate + H(+). GTP hydrolase that promotes the GTP-dependent binding of aminoacyl-tRNA to the A-site of ribosomes during protein biosynthesis. This is Elongation factor Tu from Nocardioides sp. (strain ATCC BAA-499 / JS614).